The following is a 304-amino-acid chain: Aspartate carbamoyltransferase catalytic subunit (304 aa).

2 residues coordinate carbamoyl phosphate: R57 and T58. K86 is a binding site for L-aspartate. Positions 107, 135, and 138 each coordinate carbamoyl phosphate. L-aspartate is bound by residues R168 and R229. 2 residues coordinate carbamoyl phosphate: L266 and P267.

Belongs to the aspartate/ornithine carbamoyltransferase superfamily. ATCase family. As to quaternary structure, heterooligomer of catalytic and regulatory chains.

It catalyses the reaction carbamoyl phosphate + L-aspartate = N-carbamoyl-L-aspartate + phosphate + H(+). It functions in the pathway pyrimidine metabolism; UMP biosynthesis via de novo pathway; (S)-dihydroorotate from bicarbonate: step 2/3. In terms of biological role, catalyzes the condensation of carbamoyl phosphate and aspartate to form carbamoyl aspartate and inorganic phosphate, the committed step in the de novo pyrimidine nucleotide biosynthesis pathway. The polypeptide is Aspartate carbamoyltransferase catalytic subunit (Methanosphaera stadtmanae (strain ATCC 43021 / DSM 3091 / JCM 11832 / MCB-3)).